The chain runs to 638 residues: MISARWLYCLVLLLATESCRLFCQAASKSKENVMPRPHDVCDGVCKNNASPCFQSCPPNSEGNMKFACKAKRWHKVTETCHTLNAHSIFEEDKELYSVQSSESTIRTHMFNSGLKTITDTLMEKCPKDLSCVIRGIEKSPRIPGNIAVVVQLLHNISTTLTKGVDEEKMQSYSAMANHILNSKSISNWTFIQDRNSSCVLLQSINSFASNLFMKGHLINISHVFIHTLGTVVPRNSLGKNFTFSMRVNDTSDKVTGRILLTTEELQKVPSAFQVISIAFPTLGAILEASLLENMTVNGLVLSVILPKELKNISLIFEKIRKSGERKSQCVGWHSLESRWDRRACKMIQENSRQAICRCQPNKFFTSFSILMSPNTVESPVLTYITYIGLGISICSLIICLAIEALVWSQVTKTEISYLRHLCIANIAVTLLMADVWFIVASFLSGPIVHHNGCVTATFFVHFFYLSVFFWMLAKALLILYGILIVFHTLPKSCLVASLFTVGYGCPLVIAVITLAVTEPGKGYLRPEACWLNWDMTKALLAFVVPALAIVVVNLITVTLVIIKTQRAAVGSSMFQEVRAIVRICKNIAILTPLLGLTWGFGIATVVAGHSLAFHIIFSLLNALQVSPDAMIESEWRGC.

The first 25 residues, 1-25 (MISARWLYCLVLLLATESCRLFCQA), serve as a signal peptide directing secretion. Over 26 to 386 (ASKSKENVMP…ESPVLTYITY (361 aa)) the chain is Extracellular. Residues N155, N219, N248, N293, and N311 are each glycosylated (N-linked (GlcNAc...) asparagine). A GAIN-B domain is found at 233 to 377 (PRNSLGKNFT…SILMSPNTVE (145 aa)). 2 disulfide bridges follow: C329/C356 and C344/C358. Positions 329-377 (CVGWHSLESRWDRRACKMIQENSRQAICRCQPNKFFTSFSILMSPNTVE) are GPS. Residues 387–407 (IGLGISICSLIICLAIEALVW) form a helical membrane-spanning segment. Over 408–422 (SQVTKTEISYLRHLC) the chain is Cytoplasmic. The helical transmembrane segment at 423 to 443 (IANIAVTLLMADVWFIVASFL) threads the bilayer. Residues 444–465 (SGPIVHHNGCVTATFFVHFFYL) are Extracellular-facing. A helical transmembrane segment spans residues 466 to 486 (SVFFWMLAKALLILYGILIVF). Over 487-493 (HTLPKSC) the chain is Cytoplasmic. The chain crosses the membrane as a helical span at residues 494–514 (LVASLFTVGYGCPLVIAVITL). Over 515–541 (AVTEPGKGYLRPEACWLNWDMTKALLA) the chain is Extracellular. The chain crosses the membrane as a helical span at residues 542–562 (FVVPALAIVVVNLITVTLVII). The Cytoplasmic portion of the chain corresponds to 563 to 586 (KTQRAAVGSSMFQEVRAIVRICKN). A helical membrane pass occupies residues 587–607 (IAILTPLLGLTWGFGIATVVA). The Extracellular segment spans residues 608 to 610 (GHS). A helical membrane pass occupies residues 611-631 (LAFHIIFSLLNALQVSPDAMI). The Cytoplasmic segment spans residues 632–638 (ESEWRGC).

Belongs to the G-protein coupled receptor 2 family. Adhesion G-protein coupled receptor (ADGR) subfamily.

The protein localises to the membrane. Functionally, orphan receptor. The protein is Adhesion G-protein coupled receptor F2 (Adgrf2) of Rattus norvegicus (Rat).